A 236-amino-acid chain; its full sequence is Hydantoin racemase (236 aa).

Homohexamer, homoheptamer or homooctamer.

It catalyses the reaction a D-5-monosubstituted hydantoin = a L-5-monosubstituted hydantoin. The catalysed reaction is D-5-benzylhydantoin = L-5-benzylhydantoin. Its activity is regulated as follows. Completely inhibited by HgCl(2) and iodoacetamide. Stimulated by dithiothreitol. Functionally, involved in the asymmetric conversion of racemic 5-substituted hydantoins to the corresponding L-amino acids. Catalyzes the racemization via enolization of D- and L-5-monosubstituted hydantoins. It shows preference for hydantoins with arylalkyl side chains such as 5-benzylhydantoin (BH) and, to a lesser extent, 5-(3-indolylmethylene)hydantoin (IMH). The chain is Hydantoin racemase from Paenarthrobacter aurescens (Arthrobacter aurescens).